A 304-amino-acid chain; its full sequence is uncharacterized protein (304 aa).

72–79 (GPTGSGKT) is an ATP binding site.

This sequence belongs to the CbbQ/NirQ/NorQ/GpvN family.

This is an uncharacterized protein from Bacillus subtilis (strain 168).